Consider the following 522-residue polypeptide: Glycerol kinase (522 aa).

Thr15 serves as a coordination point for substrate. Arg19 contributes to the ATP binding site. Substrate-binding positions include 89 to 90 (RE), Tyr143, and 255 to 256 (DQ). Residues Thr276, Gly321, and 430–434 (GATAN) contribute to the ATP site.

This sequence belongs to the FGGY kinase family. In terms of tissue distribution, highly expressed in germinating seeds and senescent leaves, and at lower levels in roots, leaves, flowers and siliques.

Its subcellular location is the cytoplasm. The protein resides in the cytosol. The enzyme catalyses glycerol + ATP = sn-glycerol 3-phosphate + ADP + H(+). Its pathway is polyol metabolism; glycerol degradation via glycerol kinase pathway; sn-glycerol 3-phosphate from glycerol: step 1/1. In terms of biological role, key enzyme in the regulation of glycerol uptake and metabolism. Required for resistance to nonhost Pseudomonas bacteria and to the pathogenic fungus B.cinerea. The sequence is that of Glycerol kinase (GLPK) from Arabidopsis thaliana (Mouse-ear cress).